Reading from the N-terminus, the 105-residue chain is Small ribosomal subunit protein uS10 (105 aa).

Belongs to the universal ribosomal protein uS10 family. As to quaternary structure, part of the 30S ribosomal subunit.

In terms of biological role, involved in the binding of tRNA to the ribosomes. In Synechococcus sp. (strain JA-2-3B'a(2-13)) (Cyanobacteria bacterium Yellowstone B-Prime), this protein is Small ribosomal subunit protein uS10.